A 185-amino-acid chain; its full sequence is Elongation factor P (185 aa).

Belongs to the elongation factor P family.

It is found in the cytoplasm. It participates in protein biosynthesis; polypeptide chain elongation. Functionally, involved in peptide bond synthesis. Stimulates efficient translation and peptide-bond synthesis on native or reconstituted 70S ribosomes in vitro. Probably functions indirectly by altering the affinity of the ribosome for aminoacyl-tRNA, thus increasing their reactivity as acceptors for peptidyl transferase. The chain is Elongation factor P from Staphylococcus epidermidis (strain ATCC 35984 / DSM 28319 / BCRC 17069 / CCUG 31568 / BM 3577 / RP62A).